The sequence spans 94 residues: Large ribosomal subunit protein eL31 (94 aa).

This sequence belongs to the eukaryotic ribosomal protein eL31 family.

The sequence is that of Large ribosomal subunit protein eL31 (rpl31e) from Pyrococcus abyssi (strain GE5 / Orsay).